The chain runs to 363 residues: Ribonuclease P protein subunit p40 (363 aa).

Component of nuclear RNase P and RNase MRP ribonucleoproteins. RNase P consists of a catalytic RNA moiety and about 10 protein subunits; POP1, POP4, POP5, POP7, RPP14, RPP21, RPP25, RPP30, RPP38 and RPP40. Within the RNase P complex, POP1, POP7 and RPP25 form the 'finger' subcomplex, POP5, RPP14, RPP40 and homodimeric RPP30 form the 'palm' subcomplex, and RPP21, POP4 and RPP38 form the 'wrist' subcomplex. All subunits of the RNase P complex interact with the catalytic RNA. Several subunits of RNase P are also part of the RNase MRP complex. RNase MRP consists of a catalytic RNA moiety and about 8 protein subunits; POP1, POP7, RPP25, RPP30, RPP38, RPP40 and possibly also POP4 and POP5.

It localises to the nucleus. It is found in the nucleolus. Component of ribonuclease P, a ribonucleoprotein complex that generates mature tRNA molecules by cleaving their 5'-ends. Also a component of the MRP ribonuclease complex, which cleaves pre-rRNA sequences. The chain is Ribonuclease P protein subunit p40 (RPP40) from Homo sapiens (Human).